Reading from the N-terminus, the 420-residue chain is Protein translocase subunit SecY (420 aa).

10 helical membrane-spanning segments follow: residues 9–29 (ILITLGFLFLYRVLAYIPIPG), 61–81 (LSIISLGIMPYITSSIIMELL), 104–124 (IVRYLTILITLIQAVSVSVGL), 141–161 (VFMIVSAFSMLTGTMLLMWIG), 173–193 (ISLIIFAGIVSGIPSAISGTF), 203–223 (ILMLIGIVLIVLATIFAIIYV), 257–277 (LSGVIPPIFASALLVFPSTIL), 300–320 (YNILMFLLIIFFAYFYSSIVF), 355–375 (KLTLWGSLYLALISTVPWILV), and 377–397 (AMGVPFYFGGTAVLIVVQVAI).

Belongs to the SecY/SEC61-alpha family. As to quaternary structure, component of the Sec protein translocase complex. Heterotrimer consisting of SecY, SecE and SecG subunits. The heterotrimers can form oligomers, although 1 heterotrimer is thought to be able to translocate proteins. Interacts with the ribosome. Interacts with SecDF, and other proteins may be involved. Interacts with SecA.

The protein resides in the cell inner membrane. Its function is as follows. The central subunit of the protein translocation channel SecYEG. Consists of two halves formed by TMs 1-5 and 6-10. These two domains form a lateral gate at the front which open onto the bilayer between TMs 2 and 7, and are clamped together by SecE at the back. The channel is closed by both a pore ring composed of hydrophobic SecY resides and a short helix (helix 2A) on the extracellular side of the membrane which forms a plug. The plug probably moves laterally to allow the channel to open. The ring and the pore may move independently. The sequence is that of Protein translocase subunit SecY from Helicobacter pylori (strain ATCC 700392 / 26695) (Campylobacter pylori).